A 37-amino-acid polypeptide reads, in one-letter code: Cytochrome b6-f complex subunit 5 (37 aa).

The helical transmembrane segment at 5–25 (LLCGIVLGLIPITLAGLFVAA) threads the bilayer.

It belongs to the PetG family. The 4 large subunits of the cytochrome b6-f complex are cytochrome b6, subunit IV (17 kDa polypeptide, PetD), cytochrome f and the Rieske protein, while the 4 small subunits are PetG, PetL, PetM and PetN. The complex functions as a dimer.

It is found in the cellular thylakoid membrane. In terms of biological role, component of the cytochrome b6-f complex, which mediates electron transfer between photosystem II (PSII) and photosystem I (PSI), cyclic electron flow around PSI, and state transitions. PetG is required for either the stability or assembly of the cytochrome b6-f complex. The polypeptide is Cytochrome b6-f complex subunit 5 (Cyanothece sp. (strain PCC 7425 / ATCC 29141)).